The sequence spans 829 residues: Translation initiation factor IF-2 (829 aa).

The span at 128–137 shows a compositional bias: basic and acidic residues; that stretch reads QNAEEEKVEA. The disordered stretch occupies residues 128–157; that stretch reads QNAEEEKVEASAKTVQNNEDIQPQTSKKKE. Residues 140–152 are compositionally biased toward polar residues; sequence KTVQNNEDIQPQT. The 171-residue stretch at 327 to 497 folds into the tr-type G domain; that stretch reads TRAPVVTVMG…LLIAEMQDLK (171 aa). Residues 336-343 are G1; it reads GHVDHGKT. 336–343 is a GTP binding site; the sequence is GHVDHGKT. A G2 region spans residues 361 to 365; that stretch reads GITQH. A G3 region spans residues 383-386; the sequence is DTPG. GTP contacts are provided by residues 383 to 387 and 437 to 440; these read DTPGH and NKID. The G4 stretch occupies residues 437 to 440; sequence NKID. The interval 473 to 475 is G5; the sequence is SAL.

The protein belongs to the TRAFAC class translation factor GTPase superfamily. Classic translation factor GTPase family. IF-2 subfamily.

The protein resides in the cytoplasm. In terms of biological role, one of the essential components for the initiation of protein synthesis. Protects formylmethionyl-tRNA from spontaneous hydrolysis and promotes its binding to the 30S ribosomal subunits. Also involved in the hydrolysis of GTP during the formation of the 70S ribosomal complex. In Rickettsia felis (strain ATCC VR-1525 / URRWXCal2) (Rickettsia azadi), this protein is Translation initiation factor IF-2.